The sequence spans 267 residues: Interleukin-1 beta (267 aa).

Positions 1-115 are excised as a propeptide; sequence MAPVPELTSE…DTWDDGFVCD (115 aa).

Belongs to the IL-1 family. In terms of assembly, monomer. In its precursor form, weakly interacts with full-length MEFV; the mature cytokine does not interact at all. Interacts with integrins ITGAV:ITGBV and ITGA5:ITGB1; integrin-binding is required for IL1B signaling. Interacts with cargo receptor TMED10; the interaction is direct and is required for the secretion of IL1B mature form. Interacts with HSP90AB1; the interaction facilitates cargo translocation into the ERGIC. Interacts with HSP90B1; the interaction facilitates cargo translocation into the ERGIC.

It is found in the cytoplasm. Its subcellular location is the cytosol. The protein localises to the secreted. The protein resides in the lysosome. It localises to the extracellular exosome. Potent pro-inflammatory cytokine. Initially discovered as the major endogenous pyrogen, induces prostaglandin synthesis, neutrophil influx and activation, T-cell activation and cytokine production, B-cell activation and antibody production, and fibroblast proliferation and collagen production. Promotes Th17 differentiation of T-cells. Synergizes with IL12/interleukin-12 to induce IFNG synthesis from T-helper 1 (Th1) cells. Plays a role in angiogenesis by inducing VEGF production synergistically with TNF and IL6. Involved in transduction of inflammation downstream of pyroptosis: its mature form is specifically released in the extracellular milieu by passing through the gasdermin-D (GSDMD) pore. This Felis catus (Cat) protein is Interleukin-1 beta (IL1B).